Here is a 266-residue protein sequence, read N- to C-terminus: Putative carbamate hydrolase RutD (266 aa).

Residues 14 to 115 (PVVVLISGLG…TVLISVNGWL (102 aa)) enclose the AB hydrolase-1 domain.

This sequence belongs to the AB hydrolase superfamily. Hydrolase RutD family.

The catalysed reaction is carbamate + 2 H(+) = NH4(+) + CO2. Its function is as follows. Involved in pyrimidine catabolism. May facilitate the hydrolysis of carbamate, a reaction that can also occur spontaneously. The polypeptide is Putative carbamate hydrolase RutD (Shigella sonnei (strain Ss046)).